The following is a 729-amino-acid chain: MPLVVPHAAMPEGRLMTAASRRSASPLPTLATWALWLLGALLLVFVVAVPMDVTQQLVFSGVLFAVALAVRNRGGRVVILMMMGMSLAVSCRYIWWRMTQTMGVGSAVDFILGLGLLGAELYAFVILVLGYFQVLWPLNRKPVPLPADQRLWPSVDVFIPTYNEPLSVVRTTVLAASVIDWPAGKITIHLLDDGRRDEFRAFCAEVGINYVTRTNNAHAKAGNINAALKKCSGDYVAIFDCDHIPTRSFLQVAMGWFLHDTKLALVQMPHYFFSPDPFERNLDTHGKVPNEGELFYGLLQDGNDQWNATFFCGSCAVIKRTALEEVGGVAVETVTEDAHTALKLQRRGYRTAYLAVPQAAGLATESLSGHVAQRIRWARGMAQIARIDNPLLGRGLKLSQRLCYLNAMLHFFYGVPRIIYLTAPLAYLFFGAHVIQASALMILAYALPHILQANLTNLRVQSRFRHLLWNEVYETTLAWYIFRPTLVALLNPKLGKFNVTPKGGLVARSYFDAQIAKPYLFLLLLNVVGMVAGVLRLIYVGGSGEQQTIWFNLAWTLYNMVLLGATIATASETRQVRSAHRVPLDVPVTLYLPDGDVLPSRSVNFSTGGMAIMLAQPQPIEPGLPVQIGLSHRGVEQTLPAVVRQDRDGQVSIQFTQMSMEQERWLVASTFARADIWLSQWGQHDRDAFWRSMGQVLEASARGFGRLGGHIVDSARQGFRPRRAVDLES.

3 helical membrane passes run 30-50, 110-130, and 171-191; these read LATWALWLLGALLLVFVVAVP, FILGLGLLGAELYAFVILVLG, and TTVLAASVIDWPAGKITIHLL. The tract at residues 151 to 244 is catalytic subdomain A; sequence LWPSVDVFIP…YVAIFDCDHI (94 aa). The active site involves Asp193. Substrate-binding residues include Asp240 and Asp242. The catalytic subdomain B stretch occupies residues 321–381; that stretch reads TALEEVGGVA…AQRIRWARGM (61 aa). The active site involves Asp337. 5 helical membrane-spanning segments follow: residues 405–425, 427–447, 520–540, 549–569, and 610–630; these read LNAMLHFFYGVPRIIYLTAPL, YLFFGAHVIQASALMILAYAL, LFLLLLNVVGMVAGVLRLIYV, IWFNLAWTLYNMVLLGATIAT, and MAIMLAQPQPIEPGLPVQIGL. One can recognise a PilZ domain in the interval 575–671; the sequence is QVRSAHRVPL…QERWLVASTF (97 aa).

This sequence belongs to the glycosyltransferase 2 family. It depends on Mg(2+) as a cofactor.

The protein localises to the cell inner membrane. It catalyses the reaction [(1-&gt;4)-beta-D-glucosyl](n) + UDP-alpha-D-glucose = [(1-&gt;4)-beta-D-glucosyl](n+1) + UDP + H(+). It participates in glycan metabolism; bacterial cellulose biosynthesis. Activated by bis-(3'-5') cyclic diguanylic acid (c-di-GMP). In terms of biological role, catalytic subunit of cellulose synthase. It polymerizes uridine 5'-diphosphate glucose to cellulose, which is produced as an extracellular component for mechanical and chemical protection. The polypeptide is Cellulose synthase catalytic subunit [UDP-forming] (bcsA) (Xanthomonas axonopodis pv. citri (strain 306)).